A 676-amino-acid polypeptide reads, in one-letter code: Palmitoyl-CoA ligase FUM16 (676 aa).

245–256 (IMYTSGSTGLPN) is an AMP binding site. Residues 552 to 655 (KLESIYRTSQ…SGLVTPTMKL (104 aa)) form an AMP-binding region.

The protein belongs to the ATP-dependent AMP-binding enzyme family.

The protein resides in the endoplasmic reticulum. It participates in mycotoxin biosynthesis. Functionally, palmitoyl-CoA ligase; part of the gene cluster that mediates the biosynthesis of fumonisins B1 (FB1), B2 (FB2), B3 (FB3), and B4 (FB4), which are carcinogenic mycotoxins. Plays a role in the synthesis of ceramide and is involved in self-protection from fumonisin B1 toxicity. The biosynthesis starts with the FUM1-catalyzed carbon chain assembly from one molecule of acetyl-CoA, eight molecules of malonyl-CoA, and two molecules of methionine (in S-adenosyl form). The C18 polyketide chain is released from the enzyme by a nucleophilic attack of a carbanion, which is derived from R-carbon of alanine by decarboxylation, on the carbonyl carbon of polyketide acyl chain. This step is catalyzed by the pyridoxal 5'-phosphate-dependent aminoacyl transferase FUM8. The resultant 3-keto intermediate is then stereospecifically reduced to a 3-hydroxyl product by reductase FUM13. Subsequent oxidations at C-10 by the cytochrome P450 monooxygenase FUM2, C-14 and C-15 by FUM6, FUM12 or FUM15, tricarballylic esterification of the hydroxyl groups on C-14 and C-15 by acyltransferase FUM14, and C-5 hydroxylation by 2-keto-glutarate-dependent dioxygenase FUM3 furnish the biosynthesis of fumonisins. The tricarballylic moieties are most likely derived from the citric acid cycle, and their addition to the carbon backbone may involve FUM7, FUM10, FUM11 and FUM14. The polypeptide is Palmitoyl-CoA ligase FUM16 (Gibberella moniliformis (strain M3125 / FGSC 7600) (Maize ear and stalk rot fungus)).